We begin with the raw amino-acid sequence, 211 residues long: Methylthioribulose-1-phosphate dehydratase (211 aa).

2 residues coordinate Zn(2+): His97 and His99.

The protein belongs to the aldolase class II family. MtnB subfamily. Homotetramer. Zn(2+) is required as a cofactor.

It carries out the reaction 5-(methylsulfanyl)-D-ribulose 1-phosphate = 5-methylsulfanyl-2,3-dioxopentyl phosphate + H2O. The protein operates within amino-acid biosynthesis; L-methionine biosynthesis via salvage pathway; L-methionine from S-methyl-5-thio-alpha-D-ribose 1-phosphate: step 2/6. Catalyzes the dehydration of methylthioribulose-1-phosphate (MTRu-1-P) into 2,3-diketo-5-methylthiopentyl-1-phosphate (DK-MTP-1-P). The polypeptide is Methylthioribulose-1-phosphate dehydratase (Geobacillus thermodenitrificans (strain NG80-2)).